Reading from the N-terminus, the 445-residue chain is tRNA modification GTPase MnmE (445 aa).

(6S)-5-formyl-5,6,7,8-tetrahydrofolate contacts are provided by R21, E78, and K117. A TrmE-type G domain is found at 213 to 370; the sequence is GFRIALVGAP…LKETLSERVV (158 aa). GTP contacts are provided by residues 223-228, 242-248, and 267-270; these read NAGKST, TATPGTT, and DTAG. Mg(2+) is bound by residues S227 and T248. K445 is a binding site for (6S)-5-formyl-5,6,7,8-tetrahydrofolate.

This sequence belongs to the TRAFAC class TrmE-Era-EngA-EngB-Septin-like GTPase superfamily. TrmE GTPase family. In terms of assembly, homodimer. Heterotetramer of two MnmE and two MnmG subunits. K(+) serves as cofactor.

Its subcellular location is the cytoplasm. In terms of biological role, exhibits a very high intrinsic GTPase hydrolysis rate. Involved in the addition of a carboxymethylaminomethyl (cmnm) group at the wobble position (U34) of certain tRNAs, forming tRNA-cmnm(5)s(2)U34. This Phenylobacterium zucineum (strain HLK1) protein is tRNA modification GTPase MnmE.